An 883-amino-acid polypeptide reads, in one-letter code: DNA mismatch repair protein MutS (883 aa).

Residues 1–25 (MSDSVAPDVPVIREGKNPAQHRDRT) are disordered. Residues 11-25 (VIREGKNPAQHRDRT) are compositionally biased toward basic and acidic residues. 664–671 (GPNASGKS) provides a ligand contact to ATP. The tract at residues 857 to 883 (RKGNTQPRARKSSAETEAKTQQFELPF) is disordered.

It belongs to the DNA mismatch repair MutS family.

This protein is involved in the repair of mismatches in DNA. It is possible that it carries out the mismatch recognition step. This protein has a weak ATPase activity. This Acaryochloris marina (strain MBIC 11017) protein is DNA mismatch repair protein MutS.